We begin with the raw amino-acid sequence, 614 residues long: Chaperone protein HtpG (614 aa).

The interval Met-1 to Arg-324 is a; substrate-binding. Residues Glu-325–Arg-537 form a b region. The c stretch occupies residues Met-538 to Arg-614.

It belongs to the heat shock protein 90 family. Homodimer.

It localises to the cytoplasm. Functionally, molecular chaperone. Has ATPase activity. In Desulfitobacterium hafniense (strain Y51), this protein is Chaperone protein HtpG.